The primary structure comprises 830 residues: G-type lectin S-receptor-like serine/threonine-protein kinase SD1-13 (830 aa).

Positions 1–21 (MGCLLILLLTLICFSLRLCLA) are cleaved as a signal peptide. The 124-residue stretch at 22 to 145 (TDVITFSSEF…TNTGDEILWE (124 aa)) folds into the Bulb-type lectin domain. Residues 22–434 (TDVITFSSEF…SEFKKRTNRS (413 aa)) lie on the Extracellular side of the membrane. N-linked (GlcNAc...) asparagine glycosylation is found at Asn-40, Asn-53, and Asn-82. Residues 283–321 (PSTKCDTYATCGQFASCRFNPGSTPPCMCIRGFKPQSYA) form the EGF-like; atypical domain. Disulfide bonds link Cys-287/Cys-299 and Cys-293/Cys-309. N-linked (GlcNAc...) asparagine glycosylation is found at Asn-327, Asn-384, and Asn-432. The PAN domain maps to 340-423 (CESRDNNDGS…TGVVFYIRLA (84 aa)). Intrachain disulfides connect Cys-377-Cys-398 and Cys-381-Cys-387. A helical transmembrane segment spans residues 435 to 455 (IVITVTLLVGAFLFAGTVVLA). Residues 456–830 (LWKIAKHREK…NVSLTKITGR (375 aa)) are Cytoplasmic-facing. Positions 512–798 (FSITNKLGQG…NLPEPKQPAF (287 aa)) constitute a Protein kinase domain. ATP contacts are provided by residues 518–526 (LGQGGFGAV) and Lys-540. Thr-545 is subject to Phosphothreonine. A phosphoserine mark is found at Ser-546 and Ser-561. Residues 601–618 (VKQRLLDWKTRFNIIDGI) are caM-binding. Catalysis depends on Asp-637, which acts as the Proton acceptor. Phosphoserine is present on residues Ser-641, Ser-654, and Ser-670. The residue at position 671 (Thr-671) is a Phosphothreonine. Phosphoserine is present on residues Ser-714, Ser-715, Ser-726, Ser-805, Ser-809, Ser-810, Ser-813, Ser-818, and Ser-823. Positions 789–830 (NLPEPKQPAFIPRRGTSEVESSGQSDPRASINNVSLTKITGR) are disordered. Positions 806–830 (EVESSGQSDPRASINNVSLTKITGR) are enriched in polar residues. A phosphothreonine mark is found at Thr-825 and Thr-828.

Belongs to the protein kinase superfamily. Ser/Thr protein kinase family. In terms of assembly, interacts with PUB9, PUB13 and PUB14. Binds to calmodulin (CaM) in a Ca(2+)-dependent manner. In terms of processing, autophosphorylated. As to expression, mostly expressed in rosette leaves, and, to a lower extent, in cauline leaves and stems.

The protein localises to the cell membrane. It catalyses the reaction L-seryl-[protein] + ATP = O-phospho-L-seryl-[protein] + ADP + H(+). The enzyme catalyses L-threonyl-[protein] + ATP = O-phospho-L-threonyl-[protein] + ADP + H(+). Functionally, receptor-like serine/threonine-protein kinase that represses the disease resistance signaling pathway triggered in response to bacterial pathogen such as Pseudomonas syringae pv. tomato. This is G-type lectin S-receptor-like serine/threonine-protein kinase SD1-13 (SD113) from Arabidopsis thaliana (Mouse-ear cress).